The sequence spans 144 residues: D-aminoacyl-tRNA deacylase (144 aa).

The short motif at 136–137 (GP) is the Gly-cisPro motif, important for rejection of L-amino acids element.

The protein belongs to the DTD family. As to quaternary structure, homodimer.

The protein resides in the cytoplasm. It carries out the reaction glycyl-tRNA(Ala) + H2O = tRNA(Ala) + glycine + H(+). The catalysed reaction is a D-aminoacyl-tRNA + H2O = a tRNA + a D-alpha-amino acid + H(+). In terms of biological role, an aminoacyl-tRNA editing enzyme that deacylates mischarged D-aminoacyl-tRNAs. Also deacylates mischarged glycyl-tRNA(Ala), protecting cells against glycine mischarging by AlaRS. Acts via tRNA-based rather than protein-based catalysis; rejects L-amino acids rather than detecting D-amino acids in the active site. By recycling D-aminoacyl-tRNA to D-amino acids and free tRNA molecules, this enzyme counteracts the toxicity associated with the formation of D-aminoacyl-tRNA entities in vivo and helps enforce protein L-homochirality. The polypeptide is D-aminoacyl-tRNA deacylase (Actinobacillus succinogenes (strain ATCC 55618 / DSM 22257 / CCUG 43843 / 130Z)).